The chain runs to 317 residues: Ribosomal protein L11 methyltransferase (317 aa).

Positions 158, 179, 201, and 244 each coordinate S-adenosyl-L-methionine.

It belongs to the methyltransferase superfamily. PrmA family.

Its subcellular location is the cytoplasm. The catalysed reaction is L-lysyl-[protein] + 3 S-adenosyl-L-methionine = N(6),N(6),N(6)-trimethyl-L-lysyl-[protein] + 3 S-adenosyl-L-homocysteine + 3 H(+). Methylates ribosomal protein L11. The protein is Ribosomal protein L11 methyltransferase of Streptococcus agalactiae serotype Ia (strain ATCC 27591 / A909 / CDC SS700).